The sequence spans 343 residues: Anthranilate phosphoribosyltransferase (343 aa).

Residues Gly84, 87–88 (GD), Thr92, 94–97 (NIST), 112–120 (KHGNRSASS), and Ser124 contribute to the 5-phospho-alpha-D-ribose 1-diphosphate site. Gly84 lines the anthranilate pocket. Position 96 (Ser96) interacts with Mg(2+). Asn115 serves as a coordination point for anthranilate. Residue Arg170 coordinates anthranilate. Residues Asp229 and Glu230 each contribute to the Mg(2+) site.

It belongs to the anthranilate phosphoribosyltransferase family. As to quaternary structure, homodimer. The cofactor is Mg(2+).

The catalysed reaction is N-(5-phospho-beta-D-ribosyl)anthranilate + diphosphate = 5-phospho-alpha-D-ribose 1-diphosphate + anthranilate. It functions in the pathway amino-acid biosynthesis; L-tryptophan biosynthesis; L-tryptophan from chorismate: step 2/5. In terms of biological role, catalyzes the transfer of the phosphoribosyl group of 5-phosphorylribose-1-pyrophosphate (PRPP) to anthranilate to yield N-(5'-phosphoribosyl)-anthranilate (PRA). The protein is Anthranilate phosphoribosyltransferase of Bordetella bronchiseptica (strain ATCC BAA-588 / NCTC 13252 / RB50) (Alcaligenes bronchisepticus).